The chain runs to 436 residues: Kynureninase (436 aa).

Pyridoxal 5'-phosphate contacts are provided by residues L88, T89, 116-119 (FPSD), D202, H205, and Y227. K228 is modified (N6-(pyridoxal phosphate)lysine). Residues W280 and N308 each coordinate pyridoxal 5'-phosphate.

The protein belongs to the kynureninase family. Homodimer. The cofactor is pyridoxal 5'-phosphate.

Its subcellular location is the cytoplasm. It catalyses the reaction L-kynurenine + H2O = anthranilate + L-alanine + H(+). It carries out the reaction 3-hydroxy-L-kynurenine + H2O = 3-hydroxyanthranilate + L-alanine + H(+). Its pathway is amino-acid degradation; L-kynurenine degradation; L-alanine and anthranilate from L-kynurenine: step 1/1. It functions in the pathway cofactor biosynthesis; NAD(+) biosynthesis; quinolinate from L-kynurenine: step 2/3. Catalyzes the cleavage of L-kynurenine (L-Kyn) and L-3-hydroxykynurenine (L-3OHKyn) into anthranilic acid (AA) and 3-hydroxyanthranilic acid (3-OHAA), respectively. This Schistosoma japonicum (Blood fluke) protein is Kynureninase.